We begin with the raw amino-acid sequence, 145 residues long: Deoxyuridine 5'-triphosphate nucleotidohydrolase (145 aa).

Substrate is bound by residues Arg62 to Gly64, Asn75, Thr79 to Asp81, and Lys89.

Belongs to the dUTPase family. The cofactor is Mg(2+).

It carries out the reaction dUTP + H2O = dUMP + diphosphate + H(+). The protein operates within pyrimidine metabolism; dUMP biosynthesis; dUMP from dCTP (dUTP route): step 2/2. Its function is as follows. This enzyme is involved in nucleotide metabolism: it produces dUMP, the immediate precursor of thymidine nucleotides and it decreases the intracellular concentration of dUTP so that uracil cannot be incorporated into DNA. The protein is Deoxyuridine 5'-triphosphate nucleotidohydrolase of Helicobacter pylori (strain ATCC 700392 / 26695) (Campylobacter pylori).